The following is a 948-amino-acid chain: Puromycin-sensitive aminopeptidase (948 aa).

Residues Glu206 and 341–345 contribute to the substrate site; that span reads GAMEN. Residue His377 coordinates Zn(2+). Catalysis depends on Glu378, which acts as the Proton acceptor. Zn(2+)-binding residues include His381 and Glu400.

The protein belongs to the peptidase M1 family. Zn(2+) serves as cofactor. As to expression, expressed mainly in intestinal cells in the posterior part of the intestine and in amphid sensory neurons and nerve ring neurons. Expressed in neurons in the male tail. Expressed in mature spermatids (at protein level).

It localises to the cytoplasm. It is found in the cell cortex. The protein resides in the chromosome. The protein localises to the cytoskeleton. Its subcellular location is the spindle pole. It catalyses the reaction Release of an N-terminal amino acid, preferentially alanine, from a wide range of peptides, amides and arylamides.. Its activity is regulated as follows. Inhibited by chelating agent 1,10-phenanthroline, aminopeptidase inhibitors actinonin, amastatin, and leuhistin, and to a lesser extent by puromycin. Its function is as follows. Aminopeptidase. Required for the exit from meiosis, probably upstream of cyclin cyb-3. Involved in the establishment of the anterior-posterior polarity at the embryonic 1-cell stage by regulating the dynamics of sperm-donated centrosomes. Plays a role in oocyte maturation. Required for embryonic development. The protein is Puromycin-sensitive aminopeptidase of Caenorhabditis elegans.